Reading from the N-terminus, the 256-residue chain is MNRINQLFNSNKKDILSIYFCAGNPTLDGTVNVIRTLEKHGVSMIEVGIPFSDPMADGIVIQNAATQALRNGMSLKILFEQLRNIRQEVSIPLVFMGYLNPIMQFGFENFCRKCVECGIDGVIIPDLPFRDYQDHYRIIAERYGIKVIMLITPETSEERVREIDAHTDGFIYMVSSAATTGAQQDFNEQKRAYFKKIEDMNLRNPLMVGFGISNKATFQAACEHASGAIIGSRFVTLLEEEKDPEKAILKLKDALK.

Residues Glu46 and Asp57 each act as proton acceptor in the active site.

Belongs to the TrpA family. As to quaternary structure, tetramer of two alpha and two beta chains.

It catalyses the reaction (1S,2R)-1-C-(indol-3-yl)glycerol 3-phosphate + L-serine = D-glyceraldehyde 3-phosphate + L-tryptophan + H2O. It participates in amino-acid biosynthesis; L-tryptophan biosynthesis; L-tryptophan from chorismate: step 5/5. In terms of biological role, the alpha subunit is responsible for the aldol cleavage of indoleglycerol phosphate to indole and glyceraldehyde 3-phosphate. The chain is Tryptophan synthase alpha chain from Bacteroides thetaiotaomicron (strain ATCC 29148 / DSM 2079 / JCM 5827 / CCUG 10774 / NCTC 10582 / VPI-5482 / E50).